We begin with the raw amino-acid sequence, 450 residues long: Signal recognition particle 54 kDa protein (450 aa).

GTP is bound by residues 107-114 (GIQGSGKT), 188-192 (DTAGR), and 247-250 (TKLD).

Belongs to the GTP-binding SRP family. SRP54 subfamily. Part of the signal recognition particle protein translocation system, which is composed of SRP and FtsY. Archaeal SRP consists of a 7S RNA molecule of 300 nucleotides and two protein subunits: SRP54 and SRP19.

Its subcellular location is the cytoplasm. The catalysed reaction is GTP + H2O = GDP + phosphate + H(+). In terms of biological role, involved in targeting and insertion of nascent membrane proteins into the cytoplasmic membrane. Binds to the hydrophobic signal sequence of the ribosome-nascent chain (RNC) as it emerges from the ribosomes. The SRP-RNC complex is then targeted to the cytoplasmic membrane where it interacts with the SRP receptor FtsY. The sequence is that of Signal recognition particle 54 kDa protein from Methanococcus maripaludis (strain DSM 14266 / JCM 13030 / NBRC 101832 / S2 / LL).